Here is a 258-residue protein sequence, read N- to C-terminus: Rho-related GTP-binding protein RhoU (258 aa).

Positions 1–45 (MPPQQGDPAFPDRCEAPPVPPRRERGGRGGRGPGEPGGRGRAGGA) are disordered. Residues 10-27 (FPDRCEAPPVPPRRERGG) show a composition bias toward basic and acidic residues. A compositionally biased stretch (gly residues) spans 29 to 45 (GGRGPGEPGGRGRAGGA). Residues 56 to 63 (GDGAVGKT), 103 to 107 (DTAGQ), and 161 to 164 (TQSD) each bind GTP. Glycyl lysine isopeptide (Lys-Gly) (interchain with G-Cter in ubiquitin) cross-links involve residues Lys-177 and Lys-248. The S-palmitoyl cysteine moiety is linked to residue Cys-256.

This sequence belongs to the small GTPase superfamily. Rho family. As to quaternary structure, interacts with PAK1. Interacts with PAK3. Interacts with ARHGAP30 in a GTP-independent manner. In its GTP-loaded conformation, interacts with ARHGAP31. Interacts with PTK2B/PYK2. Interacts with PAK4; the interaction is PAK4 kinase activity-independent and protects RHOU from ubiquitination. The cofactor is Mg(2+). Post-translationally, ubiquitinated. 'Lys-48'-linked ubiquitination at Lys-177 and Lys-248 by the ECS(RAB40A) complex leading to its degradation. Tyrosine phosphorylated by SRC in response to PTK2B/PYK2 activation. In terms of tissue distribution, ubiquitously expressed in all tissues examined. Expressed at high levels in the stomach, small intestine, brain, skeletal muscle and placenta.

Its subcellular location is the cell membrane. It localises to the golgi apparatus membrane. It is found in the cell junction. The protein localises to the focal adhesion. The protein resides in the cell projection. Its subcellular location is the podosome. Functionally, binds to and activates protein kinase PAK1. Plays a role in the regulation of cell morphology, cytoskeletal organization and focal adhesion assembly during cell migration. Also stimulates quiescent cells to reenter the cell cycle. Has no detectable GTPase activity but its high intrinsic guanine nucleotide exchange activity suggests it is constitutively GTP-bound. This chain is Rho-related GTP-binding protein RhoU, found in Homo sapiens (Human).